The primary structure comprises 266 residues: Pre-mRNA-splicing factor PRP11 (266 aa).

Residues 1–21 (MNYLEGVGSKKGGGGIASESQ) form a disordered region. The segment at 66-96 (LVCKLCNTMHMSWSSVERHLGGKKHGLNVLR) adopts a Matrin-type zinc-finger fold.

The protein belongs to the SF3A2 family. In terms of assembly, belongs to the CWC complex (or CEF1-associated complex), a spliceosome sub-complex reminiscent of a late-stage spliceosome composed of the U2, U5 and U6 snRNAs and at least BUD13, BUD31, BRR2, CDC40, CEF1, CLF1, CUS1, CWC2, CWC15, CWC21, CWC22, CWC23, CWC24, CWC25, CWC27, ECM2, HSH155, IST3, ISY1, LEA1, MSL1, NTC20, PRP8, PRP9, PRP11, PRP19, PRP21, PRP22, PRP45, PRP46, SLU7, SMB1, SMD1, SMD2, SMD3, SMX2, SMX3, SNT309, SNU114, SPP2, SYF1, SYF2, RSE1 and YJU2. Interacts with CUS2.

It is found in the nucleus. MRNA splicing factors, PRP9, PRP11, and PRP21, are necessary for addition of the U2 snRNP to the pre-mRNA in an early step of spliceosome assembly. The polypeptide is Pre-mRNA-splicing factor PRP11 (PRP11) (Saccharomyces cerevisiae (strain ATCC 204508 / S288c) (Baker's yeast)).